We begin with the raw amino-acid sequence, 155 residues long: Antitoxin HicB 1 (155 aa).

The 55-residue stretch at 99-153 folds into the HTH cro/C1-type domain; sequence MLNAFLDSKLTQIELANRMGVKKQEVTRIFDLRHSTKIDTVGKVASAIGHQLTLS. Residues 110 to 129 constitute a DNA-binding region (H-T-H motif); it reads QIELANRMGVKKQEVTRIFD.

The protein belongs to the HicB antitoxin family. As to quaternary structure, probably forms a complex with the probable mRNA interferase HicA1 (its cognate toxin); when complexed with HicA 1 inhibits the toxin activity.

Its function is as follows. Antitoxin component of a type II toxin-antitoxin (TA) system. Functions as an mRNA interferase antitoxin preventing effects of the HicA 1 toxin. In Photorhabdus laumondii subsp. laumondii (strain DSM 15139 / CIP 105565 / TT01) (Photorhabdus luminescens subsp. laumondii), this protein is Antitoxin HicB 1 (hicB1).